We begin with the raw amino-acid sequence, 173 residues long: Co-chaperone protein HscB homolog (173 aa).

The J domain maps to 5 to 77 (CHYALFDLQP…PRRARYLLAI (73 aa)).

The protein belongs to the HscB family. As to quaternary structure, interacts with HscA and stimulates its ATPase activity.

Co-chaperone involved in the maturation of iron-sulfur cluster-containing proteins. Seems to help targeting proteins to be folded toward HscA. This Pseudomonas putida (strain ATCC 700007 / DSM 6899 / JCM 31910 / BCRC 17059 / LMG 24140 / F1) protein is Co-chaperone protein HscB homolog.